Here is a 165-residue protein sequence, read N- to C-terminus: Large ribosomal subunit protein uL30 (165 aa).

The protein belongs to the universal ribosomal protein uL30 family. As to quaternary structure, part of the 50S ribosomal subunit.

This is Large ribosomal subunit protein uL30 from Thermoplasma acidophilum (strain ATCC 25905 / DSM 1728 / JCM 9062 / NBRC 15155 / AMRC-C165).